The primary structure comprises 463 residues: L-seryl-tRNA(Sec) selenium transferase (463 aa).

K295 is subject to N6-(pyridoxal phosphate)lysine.

The protein belongs to the SelA family. In terms of assembly, homodecamer; pentamer of dimers. Binds only one seryl-tRNA(Sec) per dimer. It depends on pyridoxal 5'-phosphate as a cofactor.

The protein localises to the cytoplasm. It catalyses the reaction L-seryl-tRNA(Sec) + selenophosphate + H(+) = L-selenocysteinyl-tRNA(Sec) + phosphate. It participates in aminoacyl-tRNA biosynthesis; selenocysteinyl-tRNA(Sec) biosynthesis; selenocysteinyl-tRNA(Sec) from L-seryl-tRNA(Sec) (bacterial route): step 1/1. Converts seryl-tRNA(Sec) to selenocysteinyl-tRNA(Sec) required for selenoprotein biosynthesis. The chain is L-seryl-tRNA(Sec) selenium transferase from Escherichia coli O127:H6 (strain E2348/69 / EPEC).